The following is a 379-amino-acid chain: Dual-specificity RNA methyltransferase RlmN (379 aa).

Glutamate 97 acts as the Proton acceptor in catalysis. One can recognise a Radical SAM core domain in the interval 103–343 (QGGRGTLCVS…VRTTRGDDID (241 aa)). Residues cysteine 110 and cysteine 346 are joined by a disulfide bond. Positions 117, 121, and 124 each coordinate [4Fe-4S] cluster. S-adenosyl-L-methionine is bound by residues 171–172 (GE), serine 203, 225–227 (SLH), and asparagine 303. Cysteine 346 acts as the S-methylcysteine intermediate in catalysis.

It belongs to the radical SAM superfamily. RlmN family. [4Fe-4S] cluster serves as cofactor.

The protein localises to the cytoplasm. The catalysed reaction is adenosine(2503) in 23S rRNA + 2 reduced [2Fe-2S]-[ferredoxin] + 2 S-adenosyl-L-methionine = 2-methyladenosine(2503) in 23S rRNA + 5'-deoxyadenosine + L-methionine + 2 oxidized [2Fe-2S]-[ferredoxin] + S-adenosyl-L-homocysteine. It catalyses the reaction adenosine(37) in tRNA + 2 reduced [2Fe-2S]-[ferredoxin] + 2 S-adenosyl-L-methionine = 2-methyladenosine(37) in tRNA + 5'-deoxyadenosine + L-methionine + 2 oxidized [2Fe-2S]-[ferredoxin] + S-adenosyl-L-homocysteine. Specifically methylates position 2 of adenine 2503 in 23S rRNA and position 2 of adenine 37 in tRNAs. m2A2503 modification seems to play a crucial role in the proofreading step occurring at the peptidyl transferase center and thus would serve to optimize ribosomal fidelity. This is Dual-specificity RNA methyltransferase RlmN from Pseudomonas aeruginosa (strain ATCC 15692 / DSM 22644 / CIP 104116 / JCM 14847 / LMG 12228 / 1C / PRS 101 / PAO1).